The sequence spans 432 residues: Adenylosuccinate synthetase (432 aa).

GTP-binding positions include 13 to 19 (GDEGKGK) and 41 to 43 (GHT). Asp14 serves as the catalytic Proton acceptor. Residues Asp14 and Gly41 each coordinate Mg(2+). IMP is bound by residues 14–17 (DEGK), 39–42 (NAGH), Thr130, Arg144, Gln225, Thr240, and Arg304. His42 acts as the Proton donor in catalysis. 300–306 (AVTGRPR) is a binding site for substrate. Residues Arg306, 332–334 (KLD), and 415–417 (STG) each bind GTP.

This sequence belongs to the adenylosuccinate synthetase family. As to quaternary structure, homodimer. The cofactor is Mg(2+).

It is found in the cytoplasm. The enzyme catalyses IMP + L-aspartate + GTP = N(6)-(1,2-dicarboxyethyl)-AMP + GDP + phosphate + 2 H(+). Its pathway is purine metabolism; AMP biosynthesis via de novo pathway; AMP from IMP: step 1/2. Functionally, plays an important role in the de novo pathway of purine nucleotide biosynthesis. Catalyzes the first committed step in the biosynthesis of AMP from IMP. The sequence is that of Adenylosuccinate synthetase from Actinobacillus succinogenes (strain ATCC 55618 / DSM 22257 / CCUG 43843 / 130Z).